A 971-amino-acid polypeptide reads, in one-letter code: MDTDLYDEFGNYIGPELDSDEDDDELGRETKDLDEDEDEDEDDVGEHEDDHPGMEVVLHEDKKYYPTAEEVYGPEVETIVQEEDTQPLTEPIIKPVKTKKFTLMEQTLPVTVYEMDFLADLMDNSELIRNVTLCGHLHHGKTCFVDCLIEQTHPEIRKRYDQDLCYTDILFTEQERGVGIKSTPVTVVLPDTKGKSYLFNIMDTPGHVNFSDEVTAGLRISDGVVLFIDAAEGVMLNTERLIKHAVQERLAVTVCINKIDRLILELKLPPTDAYYKLRHIVDEVNGLISMYSTDENLILSPLLGNVCFSSSQYSICFTLGSFAKIYADTFGDINYQEFAKRLWGDIYFNPKTRKFTKKAPSSSSQRSFVEFILEPLYKILAQVVGDVDTSLPRTLDELGIHLTKEELKLNIRPLLRLVCKKFFGEFTGFVDMCVQHIPSPKVGAKPKIEHTYTGGVDSDLGEAMSDCDPDGPLMCHTTKMYSTDDGVQFHAFGRVLSGTIHAGQPVKVLGENYTLEDEEDSQICTVGRLWISVARYHIEVNRVPAGNWVLIEGVDQPIVKTATITEPRGNEEAQIFRPLKFNTTSVIKIAVEPVNPSELPKMLDGLRKVNKSYPSLTTKVEESGEHVILGTGELYLDCVMHDLRKMYSEIDIKVADPVVTFCETVVETSSLKCFAETPNKKNKITMIAEPLEKGLAEDIENEVVQITWNRKKLGEFFQTKYDWDLLAARSIWAFGPDATGPNILVDDTLPSEVDKALLGSVKDSIVQGFQWGTREGPLCDELIRNVKFKILDAVVAQEPLHRGGGQIIPTARRVVYSAFLMATPRLMEPYYFVEVQAPADCVSAVYTVLARRRGHVTQDAPIPGSPLYTIKAFIPAIDSFGFETDLRTHTQGQAFSLSVFHHWQIVPGDPLDKSIVIRPLEPQPAPHLAREFMIKTRRRKGLSEDVSISKFFDDPMLLELAKQDVVLNYPM.

An N-acetylmethionine modification is found at M1. The interval 1-52 (MDTDLYDEFGNYIGPELDSDEDDDELGRETKDLDEDEDEDEDDVGEHEDDHP) is disordered. Residues 17-47 (LDSDEDDDELGRETKDLDEDEDEDEDDVGEH) show a composition bias toward acidic residues. S19 carries the phosphoserine modification. A Glycyl lysine isopeptide (Lys-Gly) (interchain with G-Cter in SUMO1); alternate cross-link involves residue K63. K63 participates in a covalent cross-link: Glycyl lysine isopeptide (Lys-Gly) (interchain with G-Cter in SUMO2); alternate. Position 85 is a phosphothreonine (T85). The region spanning 126–408 (ELIRNVTLCG…GIHLTKEELK (283 aa)) is the tr-type G domain. GTP-binding positions include 135 to 142 (GHLHHGKT), 203 to 207 (DTPGH), and 257 to 260 (NKID).

It belongs to the TRAFAC class translation factor GTPase superfamily. Classic translation factor GTPase family. EF-G/EF-2 subfamily. In terms of assembly, component of the U5 snRNP and the U4/U6-U5 tri-snRNP complex, a building block of the spliceosome. The U4/U6-U5 tri-snRNP complex is composed of the U4, U6 and U5 snRNAs and at least PRPF3, PRPF4, PRPF6, PRPF8, PRPF31, SNRNP200, TXNL4A, SNRNP40, DDX23, CD2BP2, PPIH, SNU13, EFTUD2, SART1 and USP39. Component of the pre-catalytic, catalytic and post-catalytic spliceosome complexes. Component of the minor spliceosome, which splices U12-type introns. Within this complex, interacts with CRIPT. Interacts with ERBB4 and PRPF8. Interacts with PIH1D1. Interacts with RPAP3 and URI1 in a ZNHIT2-dependent manner. Interacts with NRDE2. Interacts with FAM50A. Interacts with UBL5.

The protein resides in the nucleus. Its function is as follows. Required for pre-mRNA splicing as component of the spliceosome, including pre-catalytic, catalytic and post-catalytic spliceosomal complexes. Component of the U5 snRNP and the U4/U6-U5 tri-snRNP complex, a building block of the spliceosome. As a component of the minor spliceosome, involved in the splicing of U12-type introns in pre-mRNAs. This chain is 116 kDa U5 small nuclear ribonucleoprotein component (Eftud2), found in Mus musculus (Mouse).